Here is a 269-residue protein sequence, read N- to C-terminus: Phosphate import ATP-binding protein PstB 1 (269 aa).

Residues 23 to 264 (LSTEDLNVYY…PKIKAAEDYV (242 aa)) form the ABC transporter domain. 55–62 (GASGSGKS) contributes to the ATP binding site.

It belongs to the ABC transporter superfamily. Phosphate importer (TC 3.A.1.7) family. The complex is composed of two ATP-binding proteins (PstB), two transmembrane proteins (PstC and PstA) and a solute-binding protein (PstS).

It is found in the cell membrane. It carries out the reaction phosphate(out) + ATP + H2O = ADP + 2 phosphate(in) + H(+). In terms of biological role, part of the ABC transporter complex PstSACB involved in phosphate import. Responsible for energy coupling to the transport system. This Latilactobacillus sakei subsp. sakei (strain 23K) (Lactobacillus sakei subsp. sakei) protein is Phosphate import ATP-binding protein PstB 1.